A 305-amino-acid chain; its full sequence is Protoheme IX farnesyltransferase (305 aa).

9 helical membrane-spanning segments follow: residues 28–48, 52–72, 102–122, 123–143, 150–170, 176–196, 221–241, 243–263, and 282–302; these read VVLL…PGIV, VFLF…AINH, IFAA…VNLL, TALL…LYLK, IVIG…AVTG, ALIL…ALAI, INIL…FVIM, SGWI…YWAI, and IWYL…YLAL.

This sequence belongs to the UbiA prenyltransferase family. Protoheme IX farnesyltransferase subfamily.

The protein resides in the cell inner membrane. The enzyme catalyses heme b + (2E,6E)-farnesyl diphosphate + H2O = Fe(II)-heme o + diphosphate. Its pathway is porphyrin-containing compound metabolism; heme O biosynthesis; heme O from protoheme: step 1/1. Functionally, converts heme B (protoheme IX) to heme O by substitution of the vinyl group on carbon 2 of heme B porphyrin ring with a hydroxyethyl farnesyl side group. The protein is Protoheme IX farnesyltransferase of Coxiella burnetii (strain CbuK_Q154) (Coxiella burnetii (strain Q154)).